The primary structure comprises 125 residues: Large ribosomal subunit protein eL31 (125 aa).

The residue at position 1 (Met-1) is an N-acetylmethionine. Ser-15 bears the Phosphoserine mark. Residues Lys-55 and Lys-70 each carry the N6-succinyllysine modification. Lys-75 carries the N6-acetyllysine; alternate modification. The residue at position 75 (Lys-75) is an N6-succinyllysine; alternate. The residue at position 98 (Ser-98) is a Phosphoserine.

Belongs to the eukaryotic ribosomal protein eL31 family. Component of the large ribosomal subunit.

Its subcellular location is the cytoplasm. Functionally, component of the large ribosomal subunit. The ribosome is a large ribonucleoprotein complex responsible for the synthesis of proteins in the cell. The polypeptide is Large ribosomal subunit protein eL31 (RPL31) (Oryctolagus cuniculus (Rabbit)).